The sequence spans 632 residues: tRNA uridine 5-carboxymethylaminomethyl modification enzyme MnmG (632 aa).

13–18 (GGGHAG) serves as a coordination point for FAD. 273–287 (GPRYCPSIEDKIHRF) lines the NAD(+) pocket.

This sequence belongs to the MnmG family. Homodimer. Heterotetramer of two MnmE and two MnmG subunits. FAD serves as cofactor.

The protein resides in the cytoplasm. NAD-binding protein involved in the addition of a carboxymethylaminomethyl (cmnm) group at the wobble position (U34) of certain tRNAs, forming tRNA-cmnm(5)s(2)U34. In Psychrobacter cryohalolentis (strain ATCC BAA-1226 / DSM 17306 / VKM B-2378 / K5), this protein is tRNA uridine 5-carboxymethylaminomethyl modification enzyme MnmG.